Here is a 1052-residue protein sequence, read N- to C-terminus: Multidrug resistance protein MdtB (1052 aa).

11 helical membrane-spanning segments follow: residues 15–37, 345–362, 367–389, 396–418, 438–460, 472–494, 535–557, 867–889, 909–931, 968–990, and 1000–1022; these read LFIL…GIIG, FELL…YLFL, ATII…MYFL, LTLM…VIEN, GEIG…PLLF, FAVT…TPMM, HPWL…YLLI, LWLI…ESFI, LMLT…IGIV, ILMT…GVGA, and MVGG…YLLF. Residues 1032–1052 form a disordered region; it reads KNRHRDEDIDSSELLNGQEPQ.

Belongs to the resistance-nodulation-cell division (RND) (TC 2.A.6) family. MdtB subfamily. As to quaternary structure, part of a tripartite efflux system composed of MdtA, MdtB and MdtC. MdtB forms a heteromultimer with MdtC.

Its subcellular location is the cell inner membrane. The sequence is that of Multidrug resistance protein MdtB from Yersinia pseudotuberculosis serotype I (strain IP32953).